Here is a 212-residue protein sequence, read N- to C-terminus: Thymidylate kinase (212 aa).

An ATP-binding site is contributed by 11 to 18; it reads GPDGAGKS.

Belongs to the thymidylate kinase family.

It catalyses the reaction dTMP + ATP = dTDP + ADP. Functionally, phosphorylation of dTMP to form dTDP in both de novo and salvage pathways of dTTP synthesis. The polypeptide is Thymidylate kinase (Streptococcus gordonii (strain Challis / ATCC 35105 / BCRC 15272 / CH1 / DL1 / V288)).